The following is a 133-amino-acid chain: Large ribosomal subunit protein bL17 (133 aa).

It belongs to the bacterial ribosomal protein bL17 family. As to quaternary structure, part of the 50S ribosomal subunit. Contacts protein L32.

The chain is Large ribosomal subunit protein bL17 from Nitratidesulfovibrio vulgaris (strain DSM 19637 / Miyazaki F) (Desulfovibrio vulgaris).